Consider the following 778-residue polypeptide: Dolichyl-phosphate-mannose--protein mannosyltransferase 4 (778 aa).

Residues 1-28 show a composition bias toward basic and acidic residues; that stretch reads MASKSEKAVKKAQKLSKEPSVELTDTKS. Residues 1–44 form a disordered region; the sequence is MASKSEKAVKKAQKLSKEPSVELTDTKSSDNVTPKQKSPNSTEE. Polar residues predominate over residues 29–41; that stretch reads SDNVTPKQKSPNS. An N-linked (GlcNAc...) asparagine glycan is attached at asparagine 40. The next 7 helical transmembrane spans lie at 60–80, 103–123, 145–165, 196–216, 223–243, 248–268, and 288–308; these read LAFV…LNLP, FFDL…KLAG, VTIR…VFLI, ILLD…YVRF, PFSR…SCTI, VGFF…WYLW, and FCLI…HFNI. N-linked (GlcNAc...) asparagine glycosylation is present at asparagine 335. MIR domains are found at residues 336–396, 408–467, and 474–529; these read STIL…ILPA, NVPV…VVMS, and RPLY…FDDI. 4 consecutive transmembrane segments (helical) span residues 608–628, 644–664, 669–689, and 726–746; these read WWII…EILL, FYRS…PFFI, LFLH…GAFI, and VIEL…FTFF.

The protein belongs to the glycosyltransferase 39 family.

It is found in the endoplasmic reticulum membrane. It catalyses the reaction a di-trans,poly-cis-dolichyl beta-D-mannosyl phosphate + L-seryl-[protein] = 3-O-(alpha-D-mannosyl)-L-seryl-[protein] + a di-trans,poly-cis-dolichyl phosphate + H(+). The enzyme catalyses a di-trans,poly-cis-dolichyl beta-D-mannosyl phosphate + L-threonyl-[protein] = 3-O-(alpha-D-mannosyl)-L-threonyl-[protein] + a di-trans,poly-cis-dolichyl phosphate + H(+). It participates in protein modification; protein glycosylation. Functionally, transfers mannose from Dol-P-mannose to Ser or Thr residues on proteins. Required for normal cell wall and septum formation. The polypeptide is Dolichyl-phosphate-mannose--protein mannosyltransferase 4 (ogm4) (Schizosaccharomyces pombe (strain 972 / ATCC 24843) (Fission yeast)).